The sequence spans 195 residues: C2 domain-containing protein DDB_G0290753 (195 aa).

The C2 domain occupies 38–161 (KKLTKETKFE…NIKKYSYTFK (124 aa)). D72, D78, D131, D133, and D139 together coordinate Ca(2+).

The cofactor is Ca(2+).

The polypeptide is C2 domain-containing protein DDB_G0290753 (Dictyostelium discoideum (Social amoeba)).